The primary structure comprises 300 residues: Bifunctional protein FolD 2 (300 aa).

NADP(+) is bound by residues 165-167 (GRS), serine 190, and isoleucine 231.

This sequence belongs to the tetrahydrofolate dehydrogenase/cyclohydrolase family. In terms of assembly, homodimer.

It catalyses the reaction (6R)-5,10-methylene-5,6,7,8-tetrahydrofolate + NADP(+) = (6R)-5,10-methenyltetrahydrofolate + NADPH. It carries out the reaction (6R)-5,10-methenyltetrahydrofolate + H2O = (6R)-10-formyltetrahydrofolate + H(+). It participates in one-carbon metabolism; tetrahydrofolate interconversion. Functionally, catalyzes the oxidation of 5,10-methylenetetrahydrofolate to 5,10-methenyltetrahydrofolate and then the hydrolysis of 5,10-methenyltetrahydrofolate to 10-formyltetrahydrofolate. The chain is Bifunctional protein FolD 2 from Pseudomonas syringae pv. syringae (strain B728a).